The sequence spans 253 residues: Ribosomal RNA small subunit methyltransferase G (253 aa).

Residues Gly84, Phe89, 135 to 136 (AE), and Arg154 contribute to the S-adenosyl-L-methionine site. Residues 228–253 (TPAKYPRREGVPTHQPLFWKAKEQSR) form a disordered region.

Belongs to the methyltransferase superfamily. RNA methyltransferase RsmG family.

It is found in the cytoplasm. Its function is as follows. Specifically methylates the N7 position of a guanine in 16S rRNA. The sequence is that of Ribosomal RNA small subunit methyltransferase G from Deinococcus radiodurans (strain ATCC 13939 / DSM 20539 / JCM 16871 / CCUG 27074 / LMG 4051 / NBRC 15346 / NCIMB 9279 / VKM B-1422 / R1).